Here is a 452-residue protein sequence, read N- to C-terminus: Pup--protein ligase (452 aa).

Residue Glu-9 coordinates Mg(2+). Arg-53 is an ATP binding site. Residue Tyr-55 participates in Mg(2+) binding. The active-site Proton acceptor is Asp-57. Mg(2+) is bound at residue Glu-63. ATP contacts are provided by Thr-66 and Trp-419.

The protein belongs to the Pup ligase/Pup deamidase family. Pup-conjugating enzyme subfamily.

The enzyme catalyses ATP + [prokaryotic ubiquitin-like protein]-L-glutamate + [protein]-L-lysine = ADP + phosphate + N(6)-([prokaryotic ubiquitin-like protein]-gamma-L-glutamyl)-[protein]-L-lysine.. It participates in protein degradation; proteasomal Pup-dependent pathway. It functions in the pathway protein modification; protein pupylation. Its function is as follows. Catalyzes the covalent attachment of the prokaryotic ubiquitin-like protein modifier Pup to the proteasomal substrate proteins, thereby targeting them for proteasomal degradation. This tagging system is termed pupylation. The ligation reaction involves the side-chain carboxylate of the C-terminal glutamate of Pup and the side-chain amino group of a substrate lysine. This Gordonia bronchialis (strain ATCC 25592 / DSM 43247 / BCRC 13721 / JCM 3198 / KCTC 3076 / NBRC 16047 / NCTC 10667) (Rhodococcus bronchialis) protein is Pup--protein ligase.